The sequence spans 324 residues: Acetyl-coenzyme A carboxylase carboxyl transferase subunit alpha (324 aa).

One can recognise a CoA carboxyltransferase C-terminal domain in the interval 37–291 (ILEDKLENLE…DLMIRKTFEQ (255 aa)).

It belongs to the AccA family. In terms of assembly, acetyl-CoA carboxylase is a heterohexamer composed of biotin carboxyl carrier protein (AccB), biotin carboxylase (AccC) and two subunits each of ACCase subunit alpha (AccA) and ACCase subunit beta (AccD).

It is found in the cytoplasm. It catalyses the reaction N(6)-carboxybiotinyl-L-lysyl-[protein] + acetyl-CoA = N(6)-biotinyl-L-lysyl-[protein] + malonyl-CoA. It functions in the pathway lipid metabolism; malonyl-CoA biosynthesis; malonyl-CoA from acetyl-CoA: step 1/1. Its function is as follows. Component of the acetyl coenzyme A carboxylase (ACC) complex. First, biotin carboxylase catalyzes the carboxylation of biotin on its carrier protein (BCCP) and then the CO(2) group is transferred by the carboxyltransferase to acetyl-CoA to form malonyl-CoA. The sequence is that of Acetyl-coenzyme A carboxylase carboxyl transferase subunit alpha from Bacillus cereus (strain G9842).